We begin with the raw amino-acid sequence, 396 residues long: NADH-quinone oxidoreductase subunit D (396 aa).

Belongs to the complex I 49 kDa subunit family. In terms of assembly, NDH-1 is composed of 14 different subunits. Subunits NuoB, C, D, E, F, and G constitute the peripheral sector of the complex.

The protein resides in the cell inner membrane. It catalyses the reaction a quinone + NADH + 5 H(+)(in) = a quinol + NAD(+) + 4 H(+)(out). In terms of biological role, NDH-1 shuttles electrons from NADH, via FMN and iron-sulfur (Fe-S) centers, to quinones in the respiratory chain. The immediate electron acceptor for the enzyme in this species is believed to be ubiquinone. Couples the redox reaction to proton translocation (for every two electrons transferred, four hydrogen ions are translocated across the cytoplasmic membrane), and thus conserves the redox energy in a proton gradient. This is NADH-quinone oxidoreductase subunit D from Agrobacterium fabrum (strain C58 / ATCC 33970) (Agrobacterium tumefaciens (strain C58)).